Reading from the N-terminus, the 1818-residue chain is Unconventional myosin-Vb (1818 aa).

Residues 8–60 (TRYTRVWIPDPDEVWRSAELTKDYKEGDKSLQLRLEDDTILEYPVDVQNNQVP) form the Myosin N-terminal SH3-like domain. The requires for interaction with LIMA1 stretch occupies residues 21-40 (VWRSAELTKDYKEGDKSLQL). The Myosin motor domain maps to 69 to 762 (VGENDLTALS…QVAYLEKLRA (694 aa)). Residue 163-170 (GESGAGKT) participates in ATP binding. An actin-binding region spans residues 641-663 (LNLLMETLNATTPHYVRCIKPND). 6 consecutive IQ domains span residues 765-794 (FREA…ATLS), 788-817 (LRAA…TRAA), 813-842 (RTRA…ATVI), 836-865 (VCRA…EHKA), 861-890 (MEHK…AAIV), and 884-913 (ERDA…EARS). Disordered stretches follow at residues 1086–1120 (LRDE…EIGD) and 1161–1188 (QAQL…VDQD). Residues 1098 to 1118 (PSNQSSLESDSNYPSISTSEI) show a composition bias toward polar residues. 2 coiled-coil regions span residues 1140–1261 (MTVF…LILR) and 1313–1415 (LEAQ…ALAQ). S1416 is modified (phosphoserine). The 278-residue stretch at 1496-1773 (SSTINGIKKV…IRTIQAQLQE (278 aa)) folds into the Dilute domain.

It belongs to the TRAFAC class myosin-kinesin ATPase superfamily. Myosin family. As to quaternary structure, component of the CART complex, at least composed of ACTN4, HGS/HRS, MYO5B and TRIM3. Interacts with RAB11FIP2. Interacts with RAB11A and RAB8A. Found in a complex with CFTR and RAB11A. Interacts with NPC1L1. Interacts with LIMA1.

It localises to the cytoplasm. May be involved in vesicular trafficking via its association with the CART complex. The CART complex is necessary for efficient transferrin receptor recycling but not for EGFR degradation. Required in a complex with RAB11A and RAB11FIP2 for the transport of NPC1L1 to the plasma membrane. Together with RAB11A participates in CFTR trafficking to the plasma membrane and TF (transferrin) recycling in nonpolarized cells. Together with RAB11A and RAB8A participates in epithelial cell polarization. Together with RAB25 regulates transcytosis. Required for proper localization of bile salt export pump ABCB11 at the apical/canalicular plasma membrane of hepatocytes. This Mus musculus (Mouse) protein is Unconventional myosin-Vb (Myo5b).